We begin with the raw amino-acid sequence, 515 residues long: BURP domain-containing protein 9 (515 aa).

An N-terminal signal peptide occupies residues 1–29 (MKATGGPLPLILFLLIIIVLITAQHTAIA). The BURP domain occupies 292–507 (YFFEDNLAPG…GRGSIIWVPV (216 aa)). Residues Asn321, Asn332, and Asn470 are each glycosylated (N-linked (GlcNAc...) asparagine).

As to expression, expressed in shoot and panicles.

This is BURP domain-containing protein 9 (BURP9) from Oryza sativa subsp. japonica (Rice).